Here is a 282-residue protein sequence, read N- to C-terminus: Blarina toxin (282 aa).

A signal peptide spans 1 to 17; the sequence is MCFLLLCLTLTLAGTGA. Residues 18-29 constitute a propeptide, activation peptide; the sequence is VPTGPSIEIHSR. The 250-residue stretch at 30–279 folds into the Peptidase S1 domain; sequence IIGGWECDKH…YISWIQETIK (250 aa). Intrachain disulfides connect Cys36-Cys194, Cys57-Cys73, Cys170-Cys240, Cys205-Cys219, and Cys230-Cys255. The active-site Charge relay system is His72. Ser100 carries O-linked (GalNAc...) serine glycosylation. Residues Asn109 and Asn122 are each glycosylated (N-linked (GlcNAc...) asparagine). Residue Asp138 is the Charge relay system of the active site. Ser234 acts as the Charge relay system in catalysis.

The protein belongs to the peptidase S1 family. Kallikrein subfamily. As to expression, submaxillary and sublingual salivary glands.

The protein localises to the secreted. Its activity is regulated as follows. Strongly inhibited by aprotinin, moderately inhibited by secretory leukoprotease inhibitor, the Kunitz-type soybean trypsin inhibitor, and leupeptin, and not inhibited by urinary trypsin inhibitor or alpha-1 protease inhibitor. Has kallikrein-like activity, converts kininogens to kinins, and has dilatory effects on the blood vessel walls. Shows highest activity toward Pro-Phe-Arg-MCA and Boc-Val-Leu-Lys-MCA in vitro. Has preference for Arg and Lys in position P1 and hydrophobic residues in position P2. The protein is Blarina toxin (BTX) of Blarina brevicauda (Northern short-tailed shrew).